Reading from the N-terminus, the 144-residue chain is Hemoglobin embryonic subunit alpha (144 aa).

A Globin domain is found at 3 to 144 (SLSAKDKDVV…LALALAEKYR (142 aa)). His-61 is a binding site for O2. His-90 lines the heme b pocket.

It belongs to the globin family. Heterotetramer of two alpha chains and two beta chains. In terms of tissue distribution, red blood cells.

In terms of biological role, involved in oxygen transport from gills to the various peripheral tissues. The protein is Hemoglobin embryonic subunit alpha of Oryzias latipes (Japanese rice fish).